We begin with the raw amino-acid sequence, 396 residues long: Elongation factor Tu (396 aa).

The tr-type G domain occupies 10–206 (KPHINVGTIG…ALDSYIPEPQ (197 aa)). Positions 19 to 26 (GHVDHGKT) are G1. 19-26 (GHVDHGKT) provides a ligand contact to GTP. Threonine 26 is a Mg(2+) binding site. Positions 60-64 (GITIN) are G2. Residues 81 to 84 (DCPG) are G3. Residues 81 to 85 (DCPGH) and 136 to 139 (NKAD) each bind GTP. The segment at 136-139 (NKAD) is G4. Residues 174-176 (SAL) are G5.

Belongs to the TRAFAC class translation factor GTPase superfamily. Classic translation factor GTPase family. EF-Tu/EF-1A subfamily. Monomer.

Its subcellular location is the cytoplasm. The catalysed reaction is GTP + H2O = GDP + phosphate + H(+). GTP hydrolase that promotes the GTP-dependent binding of aminoacyl-tRNA to the A-site of ribosomes during protein biosynthesis. The polypeptide is Elongation factor Tu (Nitrosospira multiformis (strain ATCC 25196 / NCIMB 11849 / C 71)).